A 461-amino-acid polypeptide reads, in one-letter code: Bifunctional protein GlmU (461 aa).

A pyrophosphorylase region spans residues 1 to 229 (MEKYVVVLAA…FSESLGVNDR (229 aa)). Residues 8–11 (LAAG), lysine 22, glutamine 72, and 77–78 (GT) contribute to the UDP-N-acetyl-alpha-D-glucosamine site. Residue aspartate 102 participates in Mg(2+) binding. UDP-N-acetyl-alpha-D-glucosamine contacts are provided by glycine 139, glutamate 154, asparagine 169, and asparagine 227. Asparagine 227 provides a ligand contact to Mg(2+). A linker region spans residues 230 to 250 (IALAEATRIMQRRINEGHMRD). Residues 251-461 (GVTFIDPATA…LPLSEDEEWK (211 aa)) are N-acetyltransferase. The UDP-N-acetyl-alpha-D-glucosamine site is built by arginine 332 and lysine 350. Histidine 362 functions as the Proton acceptor in the catalytic mechanism. The UDP-N-acetyl-alpha-D-glucosamine site is built by tyrosine 365 and asparagine 376. Positions 422 and 439 each coordinate acetyl-CoA.

It in the N-terminal section; belongs to the N-acetylglucosamine-1-phosphate uridyltransferase family. In the C-terminal section; belongs to the transferase hexapeptide repeat family. As to quaternary structure, homotrimer. It depends on Mg(2+) as a cofactor.

Its subcellular location is the cytoplasm. The catalysed reaction is alpha-D-glucosamine 1-phosphate + acetyl-CoA = N-acetyl-alpha-D-glucosamine 1-phosphate + CoA + H(+). The enzyme catalyses N-acetyl-alpha-D-glucosamine 1-phosphate + UTP + H(+) = UDP-N-acetyl-alpha-D-glucosamine + diphosphate. Its pathway is nucleotide-sugar biosynthesis; UDP-N-acetyl-alpha-D-glucosamine biosynthesis; N-acetyl-alpha-D-glucosamine 1-phosphate from alpha-D-glucosamine 6-phosphate (route II): step 2/2. It participates in nucleotide-sugar biosynthesis; UDP-N-acetyl-alpha-D-glucosamine biosynthesis; UDP-N-acetyl-alpha-D-glucosamine from N-acetyl-alpha-D-glucosamine 1-phosphate: step 1/1. It functions in the pathway bacterial outer membrane biogenesis; LPS lipid A biosynthesis. Functionally, catalyzes the last two sequential reactions in the de novo biosynthetic pathway for UDP-N-acetylglucosamine (UDP-GlcNAc). The C-terminal domain catalyzes the transfer of acetyl group from acetyl coenzyme A to glucosamine-1-phosphate (GlcN-1-P) to produce N-acetylglucosamine-1-phosphate (GlcNAc-1-P), which is converted into UDP-GlcNAc by the transfer of uridine 5-monophosphate (from uridine 5-triphosphate), a reaction catalyzed by the N-terminal domain. The polypeptide is Bifunctional protein GlmU (Lactobacillus delbrueckii subsp. bulgaricus (strain ATCC BAA-365 / Lb-18)).